A 103-amino-acid chain; its full sequence is Large ribosomal subunit protein uL24 (103 aa).

Belongs to the universal ribosomal protein uL24 family. Part of the 50S ribosomal subunit.

In terms of biological role, one of two assembly initiator proteins, it binds directly to the 5'-end of the 23S rRNA, where it nucleates assembly of the 50S subunit. Its function is as follows. One of the proteins that surrounds the polypeptide exit tunnel on the outside of the subunit. The protein is Large ribosomal subunit protein uL24 of Pasteurella multocida (strain Pm70).